The sequence spans 518 residues: Fusicoccin H C-9 hydroxylase (518 aa).

Residues His12 to Ser29 traverse the membrane as a helical segment. Residues Asn81 and Asn168 are each glycosylated (N-linked (GlcNAc...) asparagine). Cys456 is a binding site for heme.

Belongs to the cytochrome P450 family. Heme serves as cofactor.

The protein resides in the membrane. It participates in mycotoxin biosynthesis. Functionally, cytochrome P450 monooxygenase; part of the 2 gene clusters that mediate the biosynthesis of fusicoccins, diterpene glucosides that display phytohormone-like activity and function as potent activators of plasma membrane H(+)-ATPases in plants by modifying 14-3-3 proteins and cause the plant disease constriction canker. The first step in the pathway is performed by the fusicoccadiene synthase PaFS that possesses both prenyl transferase and terpene cyclase activity, converting isopentenyl diphosphate and dimethylallyl diphosphate into geranylgeranyl diphosphate (GGDP) and successively converting GGDP into fusicocca-2,10(14)-diene, a precursor for fusicoccin H. The second step is the oxidation at the C-8 position by the cytochrome P450 monooxygenase PaP450-2 to yield fusicocca-2,10(14)-diene-8-beta-ol. The cytochrome P450 monooxygenase PaP450-1 then catalyzes the hydroxylation at the C-16 position to produce fusicocca-2,10(14)-diene-8-beta,16-diol. The dioxygenase fc-dox then catalyzes the 16-oxydation of fusicocca-2,10(14)-diene-8-beta,16-diol to yield an aldehyde (8-beta-hydroxyfusicocca-1,10(14)-dien-16-al). The short-chain dehydrogenase/reductase fc-sdr catalyzes the reduction of the aldehyde to yield fusicocca-1,10(14)-diene-8-beta,16-diol. The next step is the hydroxylation at C-9 performed by the cytochrome P450 monooxygenase PaP450-3 that leads to fusicoccin H aglycon which is glycosylated to fusicoccin H by the O-glycosyltransferase PaGT. Hydroxylation at C-12 by the cytochrome P450 monooxygenase PaP450-4 leads then to the production of fusicoccin Q and is followed by methylation by the O-methyltransferase PaMT to yield fusicoccin P. Fusicoccin P is further converted to fusicoccin J via prenylation by the O-glucose prenyltransferase PaPT. Cytochrome P450 monooxygenase PaP450-5 then performs hydroxylation at C-19 to yield dideacetyl-fusicoccin A which is acetylated to 3'-O-deacetyl-fusicoccin A by the O-acetyltransferase PaAT-2. Finally, a another acetylation by the O-acetyltransferase PaAT-1 yields fusicoccin A. The polypeptide is Fusicoccin H C-9 hydroxylase (Phomopsis amygdali (Fusicoccum amygdali)).